Here is a 209-residue protein sequence, read N- to C-terminus: uncharacterized protein (209 aa).

The segment covering 1–11 has biased composition (basic and acidic residues); that stretch reads MMRTNAGKETK. A disordered region spans residues 1 to 20; it reads MMRTNAGKETKGYNPAPADS.

This is an uncharacterized protein from Caenorhabditis elegans.